The chain runs to 410 residues: Probable nicotinate phosphoribosyltransferase (410 aa).

Residues Y15, F170, and T220 each contribute to the nicotinate site. Phosphohistidine is present on H223. T348 is a 5-phospho-alpha-D-ribose 1-diphosphate binding site.

The protein belongs to the NAPRTase family. Mg(2+) is required as a cofactor. It depends on Mn(2+) as a cofactor. Transiently phosphorylated on a His residue during the reaction cycle. Phosphorylation strongly increases the affinity for substrates and increases the rate of nicotinate D-ribonucleotide production. Dephosphorylation regenerates the low-affinity form of the enzyme, leading to product release.

It carries out the reaction nicotinate + 5-phospho-alpha-D-ribose 1-diphosphate + ATP + H2O = nicotinate beta-D-ribonucleotide + ADP + phosphate + diphosphate. Its pathway is cofactor biosynthesis; NAD(+) biosynthesis; nicotinate D-ribonucleotide from nicotinate: step 1/1. Functionally, catalyzes the first step in the biosynthesis of NAD from nicotinic acid, the ATP-dependent synthesis of beta-nicotinate D-ribonucleotide from nicotinate and 5-phospho-D-ribose 1-phosphate. Helps prevent cellular oxidative stress via its role in NAD biosynthesis. The protein is Probable nicotinate phosphoribosyltransferase of Schizosaccharomyces pombe (strain 972 / ATCC 24843) (Fission yeast).